The following is a 372-amino-acid chain: L-selectin (372 aa).

A signal peptide spans 1–28; the sequence is MIFPWKCQSTQRDLWNIFKLWGWTMLCC. A propeptide spanning residues 29 to 38 is cleaved from the precursor; it reads DFLAHHGTDC. Topologically, residues 39–332 are extracellular; sequence WTYHYSEKPM…FSMIKEGDYN (294 aa). Residues 55-155 enclose the C-type lectin domain; that stretch reads RFCRDNYTDL…ACHKLKAALC (101 aa). 10 disulfide bridges follow: Cys-57/Cys-155, Cys-128/Cys-147, Cys-128/Cys-160, Cys-160/Cys-171, Cys-165/Cys-180, Cys-182/Cys-191, Cys-197/Cys-241, Cys-227/Cys-254, Cys-259/Cys-303, and Cys-289/Cys-316. 2 N-linked (GlcNAc...) asparagine glycosylation sites follow: Asn-60 and Asn-104. Glu-118, Asn-120, Glu-126, Asn-143, and Asp-144 together coordinate Ca(2+). Residues 156 to 192 form the EGF-like domain; it reads YTASCQPWSCSGHGECVEIINNYTCNCDVGYYGPQCQ. The N-linked (GlcNAc...) asparagine glycan is linked to Asn-177. Sushi domains lie at 195–256 and 257–318; these read IQCE…TCQV and IQCE…ICQK. Asn-216, Asn-232, Asn-246, and Asn-271 each carry an N-linked (GlcNAc...) asparagine glycan. Residues 333 to 355 form a helical membrane-spanning segment; the sequence is PLFIPVAVMVTAFSGLAFIIWLA. Topologically, residues 356–372 are cytoplasmic; it reads RRLKKGKKSKRSMDDPY.

This sequence belongs to the selectin/LECAM family. As to quaternary structure, interaction with SELPLG/PSGL1 and PODXL2 is required for promoting recruitment and rolling of leukocytes. This interaction is dependent on the sialyl Lewis X glycan modification of SELPLG and PODXL2, and tyrosine sulfation modifications of SELPLG. Sulfation on 'Tyr-51' of SELPLG is important for L-selectin binding. Post-translationally, N-glycosylated.

The protein localises to the cell membrane. Its function is as follows. Calcium-dependent lectin that mediates cell adhesion by binding to glycoproteins on neighboring cells. Mediates the adherence of lymphocytes to endothelial cells of high endothelial venules in peripheral lymph nodes. Promotes initial tethering and rolling of leukocytes in endothelia. This chain is L-selectin (SELL), found in Pan troglodytes (Chimpanzee).